Reading from the N-terminus, the 234-residue chain is Large ribosomal subunit protein uL1 (234 aa).

It belongs to the universal ribosomal protein uL1 family. As to quaternary structure, part of the 50S ribosomal subunit.

Binds directly to 23S rRNA. The L1 stalk is quite mobile in the ribosome, and is involved in E site tRNA release. Its function is as follows. Protein L1 is also a translational repressor protein, it controls the translation of the L11 operon by binding to its mRNA. The polypeptide is Large ribosomal subunit protein uL1 (Geobacter metallireducens (strain ATCC 53774 / DSM 7210 / GS-15)).